We begin with the raw amino-acid sequence, 146 residues long: Small ribosomal subunit protein uS13 (146 aa).

Residues 119-146 form a disordered region; the sequence is ARGKKVRGQRTRSTGRKGRTVGVVRRKR.

It belongs to the universal ribosomal protein uS13 family. In terms of assembly, part of the 30S ribosomal subunit. Forms a loose heterodimer with protein S19. Forms two bridges to the 50S subunit in the 70S ribosome.

Its function is as follows. Located at the top of the head of the 30S subunit, it contacts several helices of the 16S rRNA. In the 70S ribosome it contacts the 23S rRNA (bridge B1a) and protein L5 of the 50S subunit (bridge B1b), connecting the 2 subunits; these bridges are implicated in subunit movement. This Archaeoglobus fulgidus (strain ATCC 49558 / DSM 4304 / JCM 9628 / NBRC 100126 / VC-16) protein is Small ribosomal subunit protein uS13.